The chain runs to 218 residues: Adenylate kinase (218 aa).

An ATP-binding site is contributed by 10-15 (GAGKGT). Residues 30–59 (STGDIFREAIAKGTELGRKVQDIVNSGNLV) are NMP. Residues threonine 31, arginine 36, 57–59 (NLV), 85–88 (GYPR), and glutamine 92 each bind AMP. The tract at residues 126–163 (TRRVCSKCGKVYNVITLPSKVEGICDDCGGTLIQRDDD) is LID. Residue arginine 127 coordinates ATP. Residues cysteine 130 and cysteine 133 each coordinate Zn(2+). 136 to 137 (VY) contributes to the ATP binding site. Zn(2+) contacts are provided by cysteine 150 and cysteine 153. 2 residues coordinate AMP: arginine 160 and arginine 171. Lysine 199 lines the ATP pocket.

Belongs to the adenylate kinase family. Monomer.

The protein localises to the cytoplasm. The catalysed reaction is AMP + ATP = 2 ADP. Its pathway is purine metabolism; AMP biosynthesis via salvage pathway; AMP from ADP: step 1/1. Its function is as follows. Catalyzes the reversible transfer of the terminal phosphate group between ATP and AMP. Plays an important role in cellular energy homeostasis and in adenine nucleotide metabolism. The polypeptide is Adenylate kinase (Fervidobacterium nodosum (strain ATCC 35602 / DSM 5306 / Rt17-B1)).